Reading from the N-terminus, the 495-residue chain is Glycogen synthase (495 aa).

Position 24 (lysine 24) interacts with ADP-alpha-D-glucose.

The protein belongs to the glycosyltransferase 1 family. Bacterial/plant glycogen synthase subfamily.

The enzyme catalyses [(1-&gt;4)-alpha-D-glucosyl](n) + ADP-alpha-D-glucose = [(1-&gt;4)-alpha-D-glucosyl](n+1) + ADP + H(+). It functions in the pathway glycan biosynthesis; glycogen biosynthesis. Its function is as follows. Synthesizes alpha-1,4-glucan chains using ADP-glucose. The chain is Glycogen synthase from Nitrosomonas europaea (strain ATCC 19718 / CIP 103999 / KCTC 2705 / NBRC 14298).